The following is a 719-amino-acid chain: DNA ligase (719 aa).

Residues 42 to 46 (DAAYD), 92 to 93 (SL), and E126 contribute to the NAD(+) site. K128 (N6-AMP-lysine intermediate) is an active-site residue. NAD(+) contacts are provided by R149, E185, K301, and K325. Positions 430, 433, 448, and 454 each coordinate Zn(2+). The BRCT domain occupies 640–719 (ATGSPVEGKT…DDWFKLVGED (80 aa)).

The protein belongs to the NAD-dependent DNA ligase family. LigA subfamily. Mg(2+) serves as cofactor. Mn(2+) is required as a cofactor.

The enzyme catalyses NAD(+) + (deoxyribonucleotide)n-3'-hydroxyl + 5'-phospho-(deoxyribonucleotide)m = (deoxyribonucleotide)n+m + AMP + beta-nicotinamide D-nucleotide.. Its function is as follows. DNA ligase that catalyzes the formation of phosphodiester linkages between 5'-phosphoryl and 3'-hydroxyl groups in double-stranded DNA using NAD as a coenzyme and as the energy source for the reaction. It is essential for DNA replication and repair of damaged DNA. The protein is DNA ligase of Brucella ovis (strain ATCC 25840 / 63/290 / NCTC 10512).